A 177-amino-acid polypeptide reads, in one-letter code: Interleukin-19 (177 aa).

A signal peptide spans 1-24 (MKLQCVSLWLLGTILILCSVDNHG). Cystine bridges form between Cys-28/Cys-121, Cys-75/Cys-127, and Cys-76/Cys-129. N-linked (GlcNAc...) asparagine glycosylation is present at Asn-56. N-linked (GlcNAc...) asparagine glycosylation occurs at Asn-135.

The protein belongs to the IL-10 family.

The protein localises to the secreted. Cytokine that functions as an anti-inflammatory and proangiogenic factor. Polarizes adaptive immunity to an anti-inflammatory phenotype through induction of T-helper 2 responses by both down-regulation of IFN-gamma and up-regulation of IL4 and IL13. Produced by osteocytes, stimulates granulopoiesis and neutrophil formation. Exerts its biological effect through a receptor complex consisting of a heterodimer of IL20RA and IL20RB. In turn, activates the Janus kinase (JAK) and signal transducer and activator of transcription (STAT) pathway, and importantly, STAT3. The polypeptide is Interleukin-19 (IL19) (Homo sapiens (Human)).